We begin with the raw amino-acid sequence, 444 residues long: N-succinylarginine dihydrolase (444 aa).

Residues 19–28 (AGLSFGNVAS), asparagine 110, and 137–138 (HR) contribute to the substrate site. Glutamate 174 is a catalytic residue. Substrate is bound at residue arginine 214. Histidine 250 is an active-site residue. Aspartate 252 and asparagine 362 together coordinate substrate. Residue cysteine 368 is the Nucleophile of the active site.

This sequence belongs to the succinylarginine dihydrolase family. As to quaternary structure, homodimer.

The catalysed reaction is N(2)-succinyl-L-arginine + 2 H2O + 2 H(+) = N(2)-succinyl-L-ornithine + 2 NH4(+) + CO2. It participates in amino-acid degradation; L-arginine degradation via AST pathway; L-glutamate and succinate from L-arginine: step 2/5. In terms of biological role, catalyzes the hydrolysis of N(2)-succinylarginine into N(2)-succinylornithine, ammonia and CO(2). The chain is N-succinylarginine dihydrolase from Shewanella amazonensis (strain ATCC BAA-1098 / SB2B).